Reading from the N-terminus, the 273-residue chain is Suppressor protein STM1 (273 aa).

The interval 1 to 153 is disordered; sequence MSNPFDLLGN…PKTAQLSLQD (153 aa). An N-acetylserine modification is found at S2. 3 positions are modified to phosphoserine; by MTOR: S32, S41, and S45. Residue K46 forms a Glycyl lysine isopeptide (Lys-Gly) (interchain with G-Cter in ubiquitin) linkage. Phosphoserine; by MTOR is present on residues S55 and S73. S55 bears the Phosphoserine mark. Basic and acidic residues-rich tracts occupy residues 60 to 77, 89 to 104, and 111 to 124; these read AIRDKTAGRRNNRSKDVT, RATDRHSRTGKTDTKK, and GDDKKELSAEKEAQ. A Phosphoserine modification is found at S118. Residues K121 and K171 each participate in a glycyl lysine isopeptide (Lys-Gly) (interchain with G-Cter in ubiquitin) cross-link. At T181 the chain carries Phosphothreonine; by MTOR. K184 is covalently cross-linked (Glycyl lysine isopeptide (Lys-Gly) (interchain with G-Cter in ubiquitin)). T218 is modified (phosphothreonine; by MTOR). The disordered stretch occupies residues 219–273; that stretch reads RKNFGDRNNNSRNNFNNRRGGRGARKGNNTANATNSANTVQKNRNIDVSNLPSLA. Low complexity-rich tracts occupy residues 224 to 236 and 244 to 257; these read DRNNNSRNNFNNR and KGNNTANATNSANT. Position 229 is a phosphoserine (S229). Positions 258–273 are enriched in polar residues; it reads VQKNRNIDVSNLPSLA.

This sequence belongs to the SERBP1-HABP4 family. In terms of assembly, associates with mature 80S ribosomes. Binds to the head domain of the 40S ribosomal subunit and prevents mRNA binding by inserting its alpha-helix domain towards the mRNA entry tunnel at the decoding site, where it blocks the binding of tRNA and mRNA at the A- and P-sites. Interacts with EFT1; interaction sequesters EFT1 at the A-site of the ribosome, thereby blocking the interaction sites of the mRNA-tRNA complex, promoting ribosome stabilization and hibernation. Interacts with CDC13. Associates with the telomere-proximal Y' element. Post-translationally, phosphorylation by TORC1 upon nutrient replenishment inhibits STM1 and causes its release from dormant ribosomes.

It localises to the cytoplasm. The protein resides in the nucleus. Its subcellular location is the perinuclear region. Its function is as follows. Ribosome preservation factor that protect a small pool of nontranslating, vacant ribosomes in cells under nutrient starvation conditions. Under nutrient-limiting conditions, cells reduce ribosome biogenesis and degrade ribosomes via autophagy (ribophagy) or proteasomal degradation. To avoid excessive degradation during starvation, STM1 binds to and protects 80S ribosomes from proteasomal degradation. Under nutrient-sufficient conditions, TORC1 phosphorylates and inhibits STM1 to prevent formation of dormant 80S ribosomes. Acts as an inhibitor of mRNA translation by promoting ribosome hibernation: clamps the two ribosomal subunits, thereby preventing their dissociation, and inhibits translation by excluding mRNA-binding. Acts via its association with eEF2 (EFT1), promoting ribosome stabilization and storage in an inactive state. May also repress translation by preventing association of eEF3 (YEF3 and HEF3) with ribosomes. Binds specifically G4 quadruplex (these are four-stranded right-handed helices, stabilized by guanine base quartets) and purine motif triplex (characterized by a third, antiparallel purine-rich DNA strand located within the major groove of a homopurine stretch of duplex DNA) nucleic acid structures. These structures may be present at telomeres or in rRNAs. Acts with CDC13 to control telomere length homeostasis. Involved in the control of the apoptosis-like cell death. In Saccharomyces cerevisiae (strain ATCC 204508 / S288c) (Baker's yeast), this protein is Suppressor protein STM1.